The chain runs to 144 residues: Complexin-1 (144 aa).

Positions 1 to 10 are enriched in gly residues; sequence MVSFLGGGLL. A disordered region spans residues 1 to 119; that stretch reads MVSFLGGGLL…SGFPKNLDDL (119 aa). Composition is skewed to basic and acidic residues over residues 18-27 and 36-86; these read LEEKEDKKEG and AEAK…EGRL. A coiled-coil region spans residues 29–67; that stretch reads EEEDPEIAEAKREAEEKRNEKYRKMEEEREVMRQGIRDK. The span at 103–112 shows a compositional bias: polar residues; the sequence is LQSSAQSSGF. Residue Cys141 is modified to Cysteine methyl ester. Cys141 carries S-farnesyl cysteine lipidation. Residues 142–144 constitute a propeptide, removed in mature form; it reads NLQ.

Belongs to the complexin/synaphin family. As to quaternary structure, binds to the SNARE core complex containing SNAP25, synaptobrevin and syntaxin-1. Expressed in a subset of neurons in the central nervous system, including large serotoninergic Retzius neurons and pressure-sensitive P cells.

It localises to the membrane. In terms of biological role, positively regulates a late step in synaptic vesicle exocytosis. The chain is Complexin-1 (cpx1) from Hirudo medicinalis (Medicinal leech).